A 551-amino-acid polypeptide reads, in one-letter code: CTP synthase (551 aa).

The amidoligase domain stretch occupies residues 1-273; that stretch reads MKNTTNTKRT…DSKILELLNI (273 aa). Position 21 (Ser21) interacts with CTP. Position 21 (Ser21) interacts with UTP. ATP-binding positions include 22-27 and Asp79; that span reads SLGKGL. Residues Asp79 and Glu147 each coordinate Mg(2+). Residues 154–156, 194–199, and Lys230 contribute to the CTP site; these read DIE and KTKPTQ. Residues 194–199 and Lys230 contribute to the UTP site; that span reads KTKPTQ. In terms of domain architecture, Glutamine amidotransferase type-1 spans 298–551; sequence TIAITGKYVD…ISAAVANKKG (254 aa). Gly360 serves as a coordination point for L-glutamine. Residue Cys387 is the Nucleophile; for glutamine hydrolysis of the active site. L-glutamine contacts are provided by residues 388 to 391, Glu411, and Arg479; that span reads LGMQ. Residues His524 and Glu526 contribute to the active site.

Belongs to the CTP synthase family. In terms of assembly, homotetramer.

It carries out the reaction UTP + L-glutamine + ATP + H2O = CTP + L-glutamate + ADP + phosphate + 2 H(+). The catalysed reaction is L-glutamine + H2O = L-glutamate + NH4(+). The enzyme catalyses UTP + NH4(+) + ATP = CTP + ADP + phosphate + 2 H(+). The protein operates within pyrimidine metabolism; CTP biosynthesis via de novo pathway; CTP from UDP: step 2/2. Its activity is regulated as follows. Allosterically activated by GTP, when glutamine is the substrate; GTP has no effect on the reaction when ammonia is the substrate. The allosteric effector GTP functions by stabilizing the protein conformation that binds the tetrahedral intermediate(s) formed during glutamine hydrolysis. Inhibited by the product CTP, via allosteric rather than competitive inhibition. Its function is as follows. Catalyzes the ATP-dependent amination of UTP to CTP with either L-glutamine or ammonia as the source of nitrogen. Regulates intracellular CTP levels through interactions with the four ribonucleotide triphosphates. The chain is CTP synthase from Desulfotalea psychrophila (strain LSv54 / DSM 12343).